The sequence spans 143 residues: MKPSFRRKARACALQVLYSWEISHNNIKESAIYFLKEKNKKNIDIVYFYELIIGITYDCKNIDNLMKPYLFRSLKELGHIERAILRISFYELHKRNDIPYKVSINEGIELAKLFGSEDSHKFINGVLDKAVFKMGYNKKVVIT.

The protein belongs to the NusB family.

In terms of biological role, involved in transcription antitermination. Required for transcription of ribosomal RNA (rRNA) genes. Binds specifically to the boxA antiterminator sequence of the ribosomal RNA (rrn) operons. This Buchnera aphidicola subsp. Acyrthosiphon pisum (strain 5A) protein is Transcription antitermination protein NusB.